We begin with the raw amino-acid sequence, 1138 residues long: Exportin-6-B (1138 aa).

One can recognise an Importin N-terminal domain in the interval 31 to 97 (IESLLNNFAQ…RSSLPKLLLS (67 aa)). Over residues 291–307 (SVTTNTTSSVVNGGSSS) the composition is skewed to low complexity. The disordered stretch occupies residues 291–315 (SVTTNTTSSVVNGGSSSPPLHSAAP).

Belongs to the exportin family.

The protein localises to the nucleus. The protein resides in the cytoplasm. Functionally, mediates the nuclear export of actin and profilin-actin complexes in somatic cells. Oocyte nuclei lack active actin export. Its function is as follows. Mediates the nuclear export of actin and profilin-actin complexes in somatic cells. The polypeptide is Exportin-6-B (xpo6-b) (Xenopus laevis (African clawed frog)).